We begin with the raw amino-acid sequence, 414 residues long: Snake venom metalloproteinase (414 aa).

Positions 1–20 (MIEVLLVTICLAVFPYQGSS) are cleaved as a signal peptide. A propeptide spanning residues 21-190 (IILESGNVND…KASDLNFNSD (170 aa)) is cleaved from the precursor. The residue at position 191 (Gln191) is a Pyrrolidone carboxylic acid. The Peptidase M12B domain occupies 197-393 (RYVELVIVAD…YKPQCILNKP (197 aa)). Ca(2+) is bound by residues Glu200 and Asp284. Intrachain disulfides connect Cys308/Cys388 and Cys348/Cys355. A Zn(2+)-binding site is contributed by His333. Residue Glu334 is part of the active site. Zn(2+) is bound by residues His337 and His343. Residues Cys388 and Asn391 each coordinate Ca(2+). Residues 394–414 (LRIDPVSTPVSGNELLEAGEE) constitute a propeptide that is removed on maturation.

It belongs to the venom metalloproteinase (M12B) family. P-I subfamily. Monomer. Requires Zn(2+) as cofactor. As to expression, expressed by the venom gland.

The protein localises to the secreted. Snake venom metalloproteinase that impairs hemostasis in the envenomed animal. This Crotalus molossus molossus (Northern black-tailed rattlesnake) protein is Snake venom metalloproteinase.